Consider the following 62-residue polypeptide: Large ribosomal subunit protein bL28 (62 aa).

It belongs to the bacterial ribosomal protein bL28 family.

The protein is Large ribosomal subunit protein bL28 of Bacillus velezensis (strain DSM 23117 / BGSC 10A6 / LMG 26770 / FZB42) (Bacillus amyloliquefaciens subsp. plantarum).